The following is a 990-amino-acid chain: Fibronectin-binding protein A (990 aa).

An N-terminal signal peptide occupies residues 1–35 (MKNNLRYGIRKHKLGAASVFLGTMIVVGMGQDKEA). Residues 7 to 18 (YGIRKHKLGAAS) carry the YSIRK-G/S signaling motif motif. Disordered regions lie at residues 33-61 (KEAA…SETQ) and 96-193 (PKAV…TEVK). Positions 37-55 (TSEQKTTTVEENGNSATDN) are enriched in polar residues. The segment at 37–511 (TSEQKTTTVE…SNKADGNGKN (475 aa)) is ligand-binding A region. Basic and acidic residues-rich tracts occupy residues 112 to 126 (TVKE…KPQV) and 179 to 193 (DVAE…TEVK). Residues 194 to 511 (GTDVTSKVTV…SNKADGNGKN (318 aa)) are fibrinogen/elastin/tropoelastin-binding. Residues 512–834 (GQIIQNNDFE…EGQQTIEEDT (323 aa)) form a fibronectin-binding region. One copy of the B-1 repeat lies at 545-574 (ENQDNTPLDIDYHTAIDGEGGYADGYIETI). A 2 X approximate tandem repeats region spans residues 545–604 (ENQDNTPLDIDYHTAIDGEGGYADGYIETIEETDSSAIDIDYHTAVDSEAGHVGGYTESS). A B-2 repeat occupies 575–604 (EETDSSAIDIDYHTAVDSEAGHVGGYTESS). Positions 702–969 (LGYEGGQNSG…EESTNKGMLF (268 aa)) are disordered. One copy of the D-1 repeat lies at 707–744 (GQNSGNQSFEEDTEEDKPKYEQGGNIVDIDFDSVPQIQ). The interval 707-850 (GQNSGNQSFE…TPEVPSEPET (144 aa)) is 4 X approximate tandem repeats. Residues 741-752 (PQIQGQNNGNQS) show a composition bias toward polar residues. Residues 745 to 782 (GQNNGNQSFEEDTEKDKPKYEQGGNIIDIDFDSVPQIH) form a D-2 repeat. The stretch at 783–821 (GFNKHNEIIEEDTNKDKPNYQFGGHNSVDFEEDTLPKVS) is one D-3 repeat. The span at 786 to 800 (KHNEIIEEDTNKDKP) shows a compositional bias: basic and acidic residues. The D-4; truncated repeat unit spans residues 822 to 850 (GQNEGQQTIEEDTTPPTPPTPEVPSEPET). The segment covering 836-910 (PPTPPTPEVP…PAEPGKPVPP (75 aa)) has biased composition (pro residues). WR repeat units follow at residues 851-864 (PTPP…EPET), 865-878 (PTPP…EPET), 879-892 (PTPP…EPET), 893-906 (PTPP…EPGK), and 907-920 (PVPP…KPSK). A 5 X tandem repeats, Pro-rich (WR) region spans residues 851 to 920 (PTPPTPEVPS…AEEEPKKPSK (70 aa)). The short motif at 954 to 958 (LPETG) is the LPXTG sorting signal element. A Pentaglycyl murein peptidoglycan amidated threonine modification is found at Thr957. The propeptide at 958–990 (GGEESTNKGMLFGGLFSILGLALLRRNKKNHKA) is removed by sortase.

It is found in the secreted. Its subcellular location is the cell wall. Its function is as follows. Promotes bacterial attachment to multiple substrates, such as fibronectin (Fn), fibrinogen (Fg), elastin peptides and tropoelastin. This confers to S.aureus the ability to invade endothelial cells. Promotes adherence to and aggregation of activated platelets. The polypeptide is Fibronectin-binding protein A (fnbA) (Staphylococcus aureus (strain bovine RF122 / ET3-1)).